The sequence spans 592 residues: Arginine--tRNA ligase (592 aa).

Residues 123-133 carry the 'HIGH' region motif; sequence PNTNKPLHLGH.

This sequence belongs to the class-I aminoacyl-tRNA synthetase family. In terms of assembly, monomer.

The protein resides in the cytoplasm. It catalyses the reaction tRNA(Arg) + L-arginine + ATP = L-arginyl-tRNA(Arg) + AMP + diphosphate. This is Arginine--tRNA ligase from Flavobacterium johnsoniae (strain ATCC 17061 / DSM 2064 / JCM 8514 / BCRC 14874 / CCUG 350202 / NBRC 14942 / NCIMB 11054 / UW101) (Cytophaga johnsonae).